Here is a 440-residue protein sequence, read N- to C-terminus: Light-independent protochlorophyllide reductase subunit B (440 aa).

Position 36 (D36) interacts with [4Fe-4S] cluster. Residue 427-428 (KD) coordinates substrate.

The protein belongs to the ChlB/BchB/BchZ family. As to quaternary structure, protochlorophyllide reductase is composed of three subunits; ChlL, ChlN and ChlB. Forms a heterotetramer of two ChlB and two ChlN subunits. [4Fe-4S] cluster serves as cofactor.

Its subcellular location is the plastid. It localises to the cyanelle. It catalyses the reaction chlorophyllide a + oxidized 2[4Fe-4S]-[ferredoxin] + 2 ADP + 2 phosphate = protochlorophyllide a + reduced 2[4Fe-4S]-[ferredoxin] + 2 ATP + 2 H2O. Its pathway is porphyrin-containing compound metabolism; chlorophyll biosynthesis (light-independent). Its function is as follows. Component of the dark-operative protochlorophyllide reductase (DPOR) that uses Mg-ATP and reduced ferredoxin to reduce ring D of protochlorophyllide (Pchlide) to form chlorophyllide a (Chlide). This reaction is light-independent. The NB-protein (ChlN-ChlB) is the catalytic component of the complex. The polypeptide is Light-independent protochlorophyllide reductase subunit B (Cyanophora paradoxa).